The chain runs to 151 residues: Ribosome maturation factor RimP (151 aa).

The protein belongs to the RimP family.

The protein localises to the cytoplasm. In terms of biological role, required for maturation of 30S ribosomal subunits. This is Ribosome maturation factor RimP from Aliivibrio fischeri (strain ATCC 700601 / ES114) (Vibrio fischeri).